Here is a 275-residue protein sequence, read N- to C-terminus: Lectin (275 aa).

A signal peptide spans 1–30 (MASLQTQMISFYLIFLSILLTTIFFFKVNS). Positions 111 and 129 each coordinate D-glucose. Mn(2+) contacts are provided by E149 and D151. Positions 151, 153, 155, and 159 each coordinate Ca(2+). 2 residues coordinate Mn(2+): D159 and H166. Residues 211–217 (NSLEEEN) constitute a propeptide that is removed on maturation. The D-glucose site is built by G246 and A247. Residues 270-275 (KQAADA) constitute a propeptide that is removed on maturation.

It belongs to the leguminous lectin family. In terms of assembly, heterotetramer of two alpha and two beta chains. The mature form consists of two chains, alpha and beta, produced by cleavage of the immature protein. These remain cleaved, yet fold together to form one subunit.

Functionally, D-mannose specific lectin. The sequence is that of Lectin from Lens culinaris subsp. tomentosus (Lentil).